The chain runs to 67 residues: Colostrum trypsin inhibitor (67 aa).

The BPTI/Kunitz inhibitor domain occupies 8–58 (CQLPQARGPCKAALLRYFYNSTSNACEPFTYGGCQGNNBNFETTEMCLRIC). Intrachain disulfides connect Cys-8–Cys-58, Cys-17–Cys-41, and Cys-33–Cys-54. Residue Asn-27 is glycosylated (N-linked (GlcNAc...) asparagine).

The protein localises to the secreted. This chain is Colostrum trypsin inhibitor, found in Bos taurus (Bovine).